Here is a 319-residue protein sequence, read N- to C-terminus: Putative binding protein BAB2_1146 (319 aa).

Positions 1-22 (MKRRTFLAMSLALTFLPSVALA) are cleaved as a signal peptide.

Belongs to the bacterial solute-binding protein SsuA/TauA family. As to quaternary structure, the complex is composed of two ATP-binding proteins (BAB2_1147), two transmembrane proteins (BAB2_1148) and a solute-binding protein (BAB2_1146).

It is found in the periplasm. Its function is as follows. Probably part of an ABC transporter complex. The protein is Putative binding protein BAB2_1146 of Brucella abortus (strain 2308).